We begin with the raw amino-acid sequence, 248 residues long: Ubiquinone/menaquinone biosynthesis C-methyltransferase UbiE (248 aa).

S-adenosyl-L-methionine is bound by residues serine 68, aspartate 92, and 120–121 (NA).

The protein belongs to the class I-like SAM-binding methyltransferase superfamily. MenG/UbiE family.

The catalysed reaction is a 2-demethylmenaquinol + S-adenosyl-L-methionine = a menaquinol + S-adenosyl-L-homocysteine + H(+). It carries out the reaction a 2-methoxy-6-(all-trans-polyprenyl)benzene-1,4-diol + S-adenosyl-L-methionine = a 5-methoxy-2-methyl-3-(all-trans-polyprenyl)benzene-1,4-diol + S-adenosyl-L-homocysteine + H(+). It functions in the pathway quinol/quinone metabolism; menaquinone biosynthesis; menaquinol from 1,4-dihydroxy-2-naphthoate: step 2/2. The protein operates within cofactor biosynthesis; ubiquinone biosynthesis. Methyltransferase required for the conversion of demethylmenaquinol (DMKH2) to menaquinol (MKH2) and the conversion of 2-polyprenyl-6-methoxy-1,4-benzoquinol (DDMQH2) to 2-polyprenyl-3-methyl-6-methoxy-1,4-benzoquinol (DMQH2). This is Ubiquinone/menaquinone biosynthesis C-methyltransferase UbiE from Rickettsia prowazekii (strain Madrid E).